A 159-amino-acid polypeptide reads, in one-letter code: Transcription elongation factor A protein-like 1 (159 aa).

The segment at 1–97 (MDKPRKENEE…PPCGVGKHKL (97 aa)) is disordered. Residues 17–34 (KTDEERPPVEHSPEKQSP) are compositionally biased toward basic and acidic residues. Phosphoserine is present on residues Ser-28, Ser-33, Ser-38, Ser-39, Ser-43, and Ser-44. Acidic residues predominate over residues 37–54 (QSSEEQSSEEEFFPEELL). Residues 64 to 80 (SEERPPQEGLSRKDLFE) are compositionally biased toward basic and acidic residues.

This sequence belongs to the TFS-II family. TFA subfamily. In terms of processing, phosphorylation of Ser-38 and Ser-39 is critical for transcriptional repression. As to expression, expressed in all tissues examined. Highly expressed in heart, ovary, prostate and skeletal muscle. Moderately expressed in brain, placenta, testis and small intestine. Weakly expressed in lung, liver and spleen. Expressed in several cancer cell lines.

It is found in the nucleus. May be involved in transcriptional regulation. Modulates various viral and cellular promoters in a promoter context-dependent manner. For example, transcription from the FOS promoter is increased, while Rous sarcoma virus (RSV) long terminal repeat (LTR) promoter activity is repressed. Does not bind DNA directly. The sequence is that of Transcription elongation factor A protein-like 1 from Homo sapiens (Human).